A 666-amino-acid chain; its full sequence is Probable potassium transport system protein Kup (666 aa).

Transmembrane regions (helical) follow at residues 16-36 (GFII…LYTM), 58-78 (ISLI…LIAL), 98-118 (ISPW…SDGA), 141-161 (IYQN…VLFG), 165-185 (FGTG…FSFL), 221-241 (IFIL…YSDL), 253-273 (WPFV…WILA), 299-319 (LATL…FTLI), 343-363 (LYIP…VLAF), 373-393 (YGLA…YYLI), 399-419 (PILA…FFLA), and 424-444 (FMHG…VMFI).

It belongs to the HAK/KUP transporter (TC 2.A.72) family.

It is found in the cell membrane. It catalyses the reaction K(+)(in) + H(+)(in) = K(+)(out) + H(+)(out). Transport of potassium into the cell. Likely operates as a K(+):H(+) symporter. The chain is Probable potassium transport system protein Kup from Streptococcus pyogenes serotype M28 (strain MGAS6180).